The primary structure comprises 385 residues: Carbamoyl phosphate synthase small chain (385 aa).

The CPSase stretch occupies residues 1-185 (MSEPAILVLA…LGKGFIEQTQ (185 aa)). Residues Ser47, Gly237, and Gly239 each coordinate L-glutamine. The region spanning 189–376 (NVVAYDFGVK…INEMRKANLS (188 aa)) is the Glutamine amidotransferase type-1 domain. The active-site Nucleophile is the Cys265. The L-glutamine site is built by Leu266, Gln269, Asn307, Gly309, and Phe310. Active-site residues include His349 and Glu351.

It belongs to the CarA family. Composed of two chains; the small (or glutamine) chain promotes the hydrolysis of glutamine to ammonia, which is used by the large (or ammonia) chain to synthesize carbamoyl phosphate. Tetramer of heterodimers (alpha,beta)4.

It catalyses the reaction hydrogencarbonate + L-glutamine + 2 ATP + H2O = carbamoyl phosphate + L-glutamate + 2 ADP + phosphate + 2 H(+). The enzyme catalyses L-glutamine + H2O = L-glutamate + NH4(+). The protein operates within amino-acid biosynthesis; L-arginine biosynthesis; carbamoyl phosphate from bicarbonate: step 1/1. It functions in the pathway pyrimidine metabolism; UMP biosynthesis via de novo pathway; (S)-dihydroorotate from bicarbonate: step 1/3. Functionally, small subunit of the glutamine-dependent carbamoyl phosphate synthetase (CPSase). CPSase catalyzes the formation of carbamoyl phosphate from the ammonia moiety of glutamine, carbonate, and phosphate donated by ATP, constituting the first step of 2 biosynthetic pathways, one leading to arginine and/or urea and the other to pyrimidine nucleotides. The small subunit (glutamine amidotransferase) binds and cleaves glutamine to supply the large subunit with the substrate ammonia. The protein is Carbamoyl phosphate synthase small chain of Pasteurella multocida (strain Pm70).